A 541-amino-acid chain; its full sequence is Putative nucleobase-ascorbate transporter 10 (541 aa).

12 helical membrane passes run 52-72, 79-99, 101-121, 141-161, 173-193, 196-216, 235-255, 299-319, 376-396, 397-417, 433-453, and 476-496; these read LLSL…MGGG, VIQT…FFGT, LPVI…IIYS, IQGA…LGVW, IAPL…PLLA, VEVG…LPRF, GMIL…SSGV, SFAM…LFYA, RVIQ…KFGA, FFAS…LCFV, FNIK…PQYF, and VIFM…DCTL.

This sequence belongs to the nucleobase:cation symporter-2 (NCS2) (TC 2.A.40) family.

The protein resides in the membrane. This Arabidopsis thaliana (Mouse-ear cress) protein is Putative nucleobase-ascorbate transporter 10 (NAT10).